We begin with the raw amino-acid sequence, 529 residues long: ADP,ATP carrier protein 1 (529 aa).

12 consecutive transmembrane segments (helical) span residues 24 to 44, 63 to 83, 93 to 113, 124 to 144, 149 to 169, 184 to 204, 220 to 240, 284 to 304, 322 to 342, 356 to 376, 381 to 401, and 463 to 483; these read LKKV…YTIL, IPFI…LIYA, ALFY…PLVI, DFAD…IAML, FAAF…LMFW, FYAL…PAIV, WGVT…IIAA, YMLL…LVEV, AFMG…MLFI, ALVT…LVIF, TGLV…VGAV, and ISAM…VWLT. The span at 509 to 520 shows a compositional bias: low complexity; the sequence is AAEKEASPAAKE. A disordered region spans residues 509–529; the sequence is AAEKEASPAAKEVSPAIEGVS.

Belongs to the ADP/ATP translocase tlc family.

It is found in the cell membrane. This is ADP,ATP carrier protein 1 (tlcA) from Chlamydia muridarum (strain MoPn / Nigg).